We begin with the raw amino-acid sequence, 236 residues long: tRNA (guanine-N(1)-)-methyltransferase (236 aa).

S-adenosyl-L-methionine-binding positions include glycine 114 and 134 to 139 (IGDYIL).

The protein belongs to the RNA methyltransferase TrmD family. As to quaternary structure, homodimer.

The protein localises to the cytoplasm. It catalyses the reaction guanosine(37) in tRNA + S-adenosyl-L-methionine = N(1)-methylguanosine(37) in tRNA + S-adenosyl-L-homocysteine + H(+). In terms of biological role, specifically methylates guanosine-37 in various tRNAs. In Wolbachia pipientis wMel, this protein is tRNA (guanine-N(1)-)-methyltransferase.